The chain runs to 229 residues: Juvenile hormone-binding protein (229 aa).

Positions 1–3 are cleaved as a signal peptide; sequence VLS.

The protein localises to the secreted. Prevents juvenile hormone from being hydrolyzed by general esterases by combining with it specifically. This chain is Juvenile hormone-binding protein (JHBP), found in Manduca sexta (Tobacco hawkmoth).